The primary structure comprises 222 residues: Histidine biosynthesis bifunctional protein HisIE (222 aa).

Positions 1-128 (MQPLSPAFID…SNALSPPADA (128 aa)) are phosphoribosyl-AMP cyclohydrolase. The interval 129 to 222 (CTELFRVIES…AARRGAPRRH (94 aa)) is phosphoribosyl-ATP pyrophosphohydrolase.

This sequence in the N-terminal section; belongs to the PRA-CH family. It in the C-terminal section; belongs to the PRA-PH family.

It localises to the cytoplasm. It carries out the reaction 1-(5-phospho-beta-D-ribosyl)-ATP + H2O = 1-(5-phospho-beta-D-ribosyl)-5'-AMP + diphosphate + H(+). The enzyme catalyses 1-(5-phospho-beta-D-ribosyl)-5'-AMP + H2O = 1-(5-phospho-beta-D-ribosyl)-5-[(5-phospho-beta-D-ribosylamino)methylideneamino]imidazole-4-carboxamide. The protein operates within amino-acid biosynthesis; L-histidine biosynthesis; L-histidine from 5-phospho-alpha-D-ribose 1-diphosphate: step 2/9. It functions in the pathway amino-acid biosynthesis; L-histidine biosynthesis; L-histidine from 5-phospho-alpha-D-ribose 1-diphosphate: step 3/9. The protein is Histidine biosynthesis bifunctional protein HisIE of Parasynechococcus marenigrum (strain WH8102).